The sequence spans 253 residues: Indole-3-glycerol phosphate synthase (253 aa).

Belongs to the TrpC family.

The enzyme catalyses 1-(2-carboxyphenylamino)-1-deoxy-D-ribulose 5-phosphate + H(+) = (1S,2R)-1-C-(indol-3-yl)glycerol 3-phosphate + CO2 + H2O. It participates in amino-acid biosynthesis; L-tryptophan biosynthesis; L-tryptophan from chorismate: step 4/5. This chain is Indole-3-glycerol phosphate synthase, found in Bacillus cereus (strain AH187).